A 315-amino-acid polypeptide reads, in one-letter code: Beta-carotene hydroxylase 1, chloroplastic (315 aa).

A chloroplast-targeting transit peptide spans methionine 1–cysteine 58. The next 2 helical transmembrane spans lie at tyrosine 112–tyrosine 132 and phenylalanine 146–tryptophan 166. A Fatty acid hydroxylase domain is found at alanine 159 to phenylalanine 286. Positions histidine 171–histidine 176 match the Histidine box-1 motif. Residues histidine 183–histidine 187 carry the Histidine box-2 motif. Transmembrane regions (helical) follow at residues leucine 196 to phenylalanine 216 and isoleucine 222 to phenylalanine 242. The short motif at histidine 244–histidine 249 is the Histidine box-3 element. Residues histidine 270 to histidine 274 carry the Histidine box-4 motif.

The protein belongs to the sterol desaturase family.

It is found in the plastid. The protein localises to the chloroplast membrane. It carries out the reaction all-trans-beta-carotene + 4 reduced [2Fe-2S]-[ferredoxin] + 2 O2 + 4 H(+) = all-trans-zeaxanthin + 4 oxidized [2Fe-2S]-[ferredoxin] + 2 H2O. It catalyses the reaction all-trans-beta-carotene + 2 reduced [2Fe-2S]-[ferredoxin] + O2 + 2 H(+) = beta-cryptoxanthin + 2 oxidized [2Fe-2S]-[ferredoxin] + H2O. The enzyme catalyses beta-cryptoxanthin + 2 reduced [2Fe-2S]-[ferredoxin] + O2 + 2 H(+) = all-trans-zeaxanthin + 2 oxidized [2Fe-2S]-[ferredoxin] + H2O. Inhibited by o-phenanthroline and 8-hydroxyquinoline. Functionally, nonheme diiron monooxygenase involved in the biosynthesis of xanthophylls. Specific for beta-ring hydroxylations of beta-carotene. Produces beta-cryptoxanthin and zeaxanthin. Uses ferredoxin as an electron donor. The chain is Beta-carotene hydroxylase 1, chloroplastic from Capsicum annuum (Capsicum pepper).